The chain runs to 231 residues: Aminodeoxyfutalosine nucleosidase (231 aa).

Glu-14 (proton acceptor) is an active-site residue. Residues Gly-81, Val-155, and Met-175–Glu-176 contribute to the substrate site. Asp-199 (proton donor) is an active-site residue.

It belongs to the PNP/UDP phosphorylase family. As to quaternary structure, homodimer.

It catalyses the reaction 6-amino-6-deoxyfutalosine + H2O = dehypoxanthine futalosine + adenine. The enzyme catalyses S-adenosyl-L-homocysteine + H2O = S-(5-deoxy-D-ribos-5-yl)-L-homocysteine + adenine. It carries out the reaction S-methyl-5'-thioadenosine + H2O = 5-(methylsulfanyl)-D-ribose + adenine. The catalysed reaction is 5'-deoxyadenosine + H2O = 5-deoxy-D-ribose + adenine. It functions in the pathway quinol/quinone metabolism; menaquinone biosynthesis. Its pathway is amino-acid biosynthesis; L-methionine biosynthesis via salvage pathway; S-methyl-5-thio-alpha-D-ribose 1-phosphate from S-methyl-5'-thioadenosine (hydrolase route): step 1/2. Catalyzes the direct conversion of aminodeoxyfutalosine (AFL) into dehypoxanthine futalosine (DHFL) and adenine via the hydrolysis of the N-glycosidic bond; this reaction seems to represent an essential step in the menaquinone biosynthesis pathway in Helicobacter species. Can also probably catalyzes the hydrolysis of 5'-methylthioadenosine (MTA) and S-adenosylhomocysteine (SAH) to adenine and the corresponding thioribose, 5'-methylthioribose and S-ribosylhomocysteine, respectively. These other activities highlight the tremendous versatility of the enzyme, which also plays key roles in S-adenosylmethionine recycling and in the biosynthesis of the quorum-sensing molecule autoinducer-2. Does not act on futalosine (FL) as substrate. This chain is Aminodeoxyfutalosine nucleosidase (mtnN), found in Helicobacter pylori (strain ATCC 700392 / 26695) (Campylobacter pylori).